The sequence spans 719 residues: Translation initiation factor IF-2 (719 aa).

The span at 54 to 67 (NKEETKPNVDEKPP) shows a compositional bias: basic and acidic residues. Disordered regions lie at residues 54–75 (NKEETKPNVDEKPPNQDTLTDN) and 97–122 (STKNVTPNGNNKKDKKKKNKKDKRKN). A compositionally biased stretch (basic residues) spans 109–122 (KDKKKKNKKDKRKN). In terms of domain architecture, tr-type G spans 221-390 (HRSPVVTVMG…LLVSEMSELK (170 aa)). The interval 230–237 (GHVDHGKT) is G1. 230–237 (GHVDHGKT) is a binding site for GTP. The tract at residues 255–259 (GITQH) is G2. Residues 276–279 (DTPG) form a G3 region. Residues 276-280 (DTPGH) and 330-333 (NKMD) each bind GTP. The tract at residues 330–333 (NKMD) is G4. The segment at 366–368 (SAR) is G5.

It belongs to the TRAFAC class translation factor GTPase superfamily. Classic translation factor GTPase family. IF-2 subfamily.

It localises to the cytoplasm. One of the essential components for the initiation of protein synthesis. Protects formylmethionyl-tRNA from spontaneous hydrolysis and promotes its binding to the 30S ribosomal subunits. Also involved in the hydrolysis of GTP during the formation of the 70S ribosomal complex. The chain is Translation initiation factor IF-2 from Alkaliphilus oremlandii (strain OhILAs) (Clostridium oremlandii (strain OhILAs)).